The following is a 311-amino-acid chain: Aspartate carbamoyltransferase catalytic subunit (311 aa).

Carbamoyl phosphate-binding residues include arginine 55 and threonine 56. L-aspartate is bound at residue lysine 85. Carbamoyl phosphate is bound by residues arginine 106, histidine 135, and glutamine 138. Arginine 168 and arginine 230 together coordinate L-aspartate. Residues leucine 268 and proline 269 each contribute to the carbamoyl phosphate site.

It belongs to the aspartate/ornithine carbamoyltransferase superfamily. ATCase family. As to quaternary structure, heterododecamer (2C3:3R2) of six catalytic PyrB chains organized as two trimers (C3), and six regulatory PyrI chains organized as three dimers (R2).

The catalysed reaction is carbamoyl phosphate + L-aspartate = N-carbamoyl-L-aspartate + phosphate + H(+). Its pathway is pyrimidine metabolism; UMP biosynthesis via de novo pathway; (S)-dihydroorotate from bicarbonate: step 2/3. Its function is as follows. Catalyzes the condensation of carbamoyl phosphate and aspartate to form carbamoyl aspartate and inorganic phosphate, the committed step in the de novo pyrimidine nucleotide biosynthesis pathway. The polypeptide is Aspartate carbamoyltransferase catalytic subunit (Yersinia pseudotuberculosis serotype IB (strain PB1/+)).